A 562-amino-acid chain; its full sequence is Urocanate hydratase (562 aa).

NAD(+) is bound by residues 52–53 (GG), glutamine 130, 176–178 (GMG), glutamate 196, arginine 201, 242–243 (NA), 263–267 (QTSAH), 273–274 (YL), and tyrosine 322. Cysteine 410 is a catalytic residue. Glycine 492 lines the NAD(+) pocket.

It belongs to the urocanase family. It depends on NAD(+) as a cofactor.

It localises to the cytoplasm. It catalyses the reaction 4-imidazolone-5-propanoate = trans-urocanate + H2O. It participates in amino-acid degradation; L-histidine degradation into L-glutamate; N-formimidoyl-L-glutamate from L-histidine: step 2/3. Functionally, catalyzes the conversion of urocanate to 4-imidazolone-5-propionate. The protein is Urocanate hydratase of Shewanella pealeana (strain ATCC 700345 / ANG-SQ1).